The following is a 352-amino-acid chain: MTTSKPHEENLSPLSYRAAGVDIDAGERLVENIRPYAKRTLRPEVLAGIGGFGALFEISRKFNNPVLVAGTDGVGTKLKLAFESGRHDTVGIDLVAMSVNDILVQGAEPLFFLDYFACGKLDVDTATLVVKGIAAGCEQAGCALIGGETAEMPGMYPEGEYDLAGFAVGAVEKDRIITGTTIKAGDAVLGLASSGAHSNGYSLIRKIIEKNNVDLSADFHGRALIDVIMAPTRIYVKPLLELMRQVPVKGMAHITGGGLLENIPRILPEGVTAVLKKETWEMPPLFAWLQREGNVADNEMHRVFNCGIGMAVVVAPEYIDAAAQLLQSKGEIAWRIGTIREQRADEPRTILE.

It belongs to the AIR synthase family.

The protein localises to the cytoplasm. It catalyses the reaction 2-formamido-N(1)-(5-O-phospho-beta-D-ribosyl)acetamidine + ATP = 5-amino-1-(5-phospho-beta-D-ribosyl)imidazole + ADP + phosphate + H(+). Its pathway is purine metabolism; IMP biosynthesis via de novo pathway; 5-amino-1-(5-phospho-D-ribosyl)imidazole from N(2)-formyl-N(1)-(5-phospho-D-ribosyl)glycinamide: step 2/2. This chain is Phosphoribosylformylglycinamidine cyclo-ligase, found in Nitrosospira multiformis (strain ATCC 25196 / NCIMB 11849 / C 71).